We begin with the raw amino-acid sequence, 213 residues long: MSCEQHYRTLIDKYIDGEATAEERQELNEHLETCDACFEYMLEVRKVVAFVQSASHVQAPEGFTENVMKNLPKRKQTNRFKVWMRRYPLAVAAAVFVLLMSTSLFSMWSSDGEHVTVTGTGNVSIDQESGRVIVPEGEVIQGDLVVRNGELIIEGEVQGNVLLVNSSQYLASPGSVSGEIDEVNQILDWIWYHTKKFLTKVIDISDEKNSPSS.

Residues 1–86 (MSCEQHYRTL…TNRFKVWMRR (86 aa)) are Cytoplasmic-facing. Zn(2+) contacts are provided by His-30, Cys-34, and Cys-37. Residues 87–109 (YPLAVAAAVFVLLMSTSLFSMWS) traverse the membrane as a helical segment. Topologically, residues 110-213 (SDGEHVTVTG…ISDEKNSPSS (104 aa)) are extracellular.

This sequence belongs to the zinc-associated anti-sigma factor (ZAS) superfamily. Anti-sigma-W factor family. Zn(2+) is required as a cofactor. Post-translationally, is processed by three successive proteolytic events. First, the extracellular region of RsiW is cleaved by PrsW (Site-1 cleavage) in response to cell envelope stresses. Next, it undergoes cleavage at an intramembrane site (Site-2 cleavage) mediated by RasP. This cleavage uncovers a cryptic proteolytic tag with conserved alanine residues in the transmembrane segment, that is recognized mainly by the ClpXP protease, which completely degrades the protein in the cytoplasm and leads to the induction of the sigma-W-controlled genes.

The protein localises to the membrane. Its function is as follows. Is the anti-sigma factor for SigW. The presence of RsiW leads to the inactivation of SigW, and its proteolytic destruction to sigma-W activation. The chain is Anti-sigma-W factor RsiW (rsiW) from Halalkalibacterium halodurans (strain ATCC BAA-125 / DSM 18197 / FERM 7344 / JCM 9153 / C-125) (Bacillus halodurans).